Consider the following 344-residue polypeptide: FCS-Like Zinc finger 10 (344 aa).

Residues 270-314 (DFLSFCYGCSKKLGMGEDIYMYSGYKAFCSSECRSKEIDLDEEME) form an FLZ-type zinc finger. Acidic residues predominate over residues 309 to 320 (LDEEMEDGDEEE). A disordered region spans residues 309-344 (LDEEMEDGDEEEAIKSVSSSDKESKKKSNGVFFTVG).

The protein belongs to the FLZ family. Interacts with KIN10 and KIN11 via its FLZ-type zinc finger domain. Interacts with KINB1, KINB2 and KINB3 via its N-terminal part. Forms homodimer and heterodimer with FLZ2 and FLZ12 in vitro. As to expression, early expressed in hypocotyl and cotyledon and preferentially in the stelar region of the shoot and root. Later expressed in root-shoot junction, lateral root, old or senescing leaves and in pistil and pollen of flower buds or open flowers.

It localises to the cytoplasm. Its subcellular location is the nucleus. The protein localises to the endoplasmic reticulum. In terms of biological role, may act as an adapter to facilitate the interaction of SnRK1 complex with effector proteins, conferring tissue- and stimulus-type specific differences in the SnRK1 regulation pathway. Negatively regulates KIN10 leading to a repression of the SnRK1 signaling pathway. In Arabidopsis thaliana (Mouse-ear cress), this protein is FCS-Like Zinc finger 10.